The primary structure comprises 458 residues: Na(+)/H(+) antiporter NhaA (458 aa).

12 helical membrane passes run 27–47, 78–98, 114–134, 143–163, 172–192, 201–221, 222–242, 249–269, 316–336, 346–366, 388–408, and 421–441; these read FLHV…AALI, LHFW…GMEI, ILPI…YLSF, GWAV…ALLG, VILL…IAFF, GLAI…IGLA, SAWL…ITGV, VILG…PLTI, PWVA…VSFA, FLVV…GIIT, ILLI…VSML, and IGVL…GLIY.

The protein belongs to the NhaA Na(+)/H(+) (TC 2.A.33) antiporter family.

It localises to the cell inner membrane. It carries out the reaction Na(+)(in) + 2 H(+)(out) = Na(+)(out) + 2 H(+)(in). Na(+)/H(+) antiporter that extrudes sodium in exchange for external protons. In Bartonella quintana (strain Toulouse) (Rochalimaea quintana), this protein is Na(+)/H(+) antiporter NhaA.